We begin with the raw amino-acid sequence, 210 residues long: Large ribosomal subunit protein uL4 (210 aa).

Residues 44–79 (QHQGTHKVKTRSEVSGGGRKPYRQKGTGNARRGSSR) are disordered.

It belongs to the universal ribosomal protein uL4 family. As to quaternary structure, part of the 50S ribosomal subunit.

Functionally, one of the primary rRNA binding proteins, this protein initially binds near the 5'-end of the 23S rRNA. It is important during the early stages of 50S assembly. It makes multiple contacts with different domains of the 23S rRNA in the assembled 50S subunit and ribosome. In terms of biological role, forms part of the polypeptide exit tunnel. This Chloroherpeton thalassium (strain ATCC 35110 / GB-78) protein is Large ribosomal subunit protein uL4.